A 185-amino-acid chain; its full sequence is MYLFVNIIWRNFISKNNLPKANREIRAREVRLVDENSEMHGVVNIREALDMAERAGLDLVEISPNAVPPVCKILDFGKFKYENKKRLHEARKKQKIVVLKEMKFKPNISIGDFETKLRKIKEFLKDGDKVKISLWFKGREILHKEVGHELFKRIELALEGLIKIDQHAKMEGKQMIMIISPDIKV.

The protein belongs to the IF-3 family. As to quaternary structure, monomer.

The protein localises to the cytoplasm. IF-3 binds to the 30S ribosomal subunit and shifts the equilibrium between 70S ribosomes and their 50S and 30S subunits in favor of the free subunits, thus enhancing the availability of 30S subunits on which protein synthesis initiation begins. This Rickettsia typhi (strain ATCC VR-144 / Wilmington) protein is Translation initiation factor IF-3.